A 153-amino-acid polypeptide reads, in one-letter code: Protein DpnD (153 aa).

This is Protein DpnD from Streptococcus pneumoniae serotype 4 (strain ATCC BAA-334 / TIGR4).